A 494-amino-acid polypeptide reads, in one-letter code: MDASTLFKKVKVKRVLGSLEQQIDDITTDSRTAREGSIFVASVGYTVDSHKFCQNVADQGCKLVVVNKEQSLPANVTQVVVPDTLRVASILAHTLYDYPSHQLVTFGVTGTNGKTSIATMIHLIQRKLQKNSAYLGTNGFQINETKTKGANTTPETVSLTKKIKEAVDAGAESMTLEVSSHGLVLGRLRGVEFDVAIFSNLTQDHLDFHGTMEAYGHAKSLLFSQLGEDLSKEKYVVLNNDDSFSEYLRTVTPYEVFSYGIDEEAQFMAKNIQESLQGVSFDFVTPFGTYPVKSPYVGKFNISNIMAAMIAVWSKGTSLETIIKAVENLEPVEGRLEVLDPSLPIDLIIDYAHTADGMNKLIDAVQPFVKQKLIFLVGMAGERDLTKTPEMGRVACRADYVIFTPDNPANDDPKMLTAELAKGATHQNYIEFDDRAEGIKHAIDIAEPGDTVVLASKGREPYQIMPGHIKVPHRDDLIGLEAAYKKFGGGPVDQ.

Ser30 serves as a coordination point for UDP-N-acetyl-alpha-D-muramoyl-L-alanyl-D-glutamate. 110–116 (GTNGKTS) serves as a coordination point for ATP. Residues 152-153 (TT), Ser179, and Arg187 contribute to the UDP-N-acetyl-alpha-D-muramoyl-L-alanyl-D-glutamate site. Position 219 is an N6-carboxylysine (Lys219). Residues 406–409 (DNPA) carry the L-lysine recognition motif motif.

It belongs to the MurCDEF family. MurE subfamily. Post-translationally, carboxylation is probably crucial for Mg(2+) binding and, consequently, for the gamma-phosphate positioning of ATP.

It is found in the cytoplasm. The enzyme catalyses UDP-N-acetyl-alpha-D-muramoyl-L-alanyl-D-glutamate + L-lysine + ATP = UDP-N-acetyl-alpha-D-muramoyl-L-alanyl-gamma-D-glutamyl-L-lysine + ADP + phosphate + H(+). It participates in cell wall biogenesis; peptidoglycan biosynthesis. Its function is as follows. Catalyzes the addition of L-lysine to the nucleotide precursor UDP-N-acetylmuramoyl-L-alanyl-D-glutamate (UMAG) in the biosynthesis of bacterial cell-wall peptidoglycan. The polypeptide is UDP-N-acetylmuramoyl-L-alanyl-D-glutamate--L-lysine ligase (Staphylococcus aureus (strain Mu3 / ATCC 700698)).